The chain runs to 694 residues: TBC1 domain family member 14 (694 aa).

Ser92 bears the Phosphoserine mark. Positions 272-289 (TAQKDSKKTQKEYEDKAG) are enriched in basic and acidic residues. The interval 272–305 (TAQKDSKKTQKEYEDKAGRPSRPPSPKQNVRKNL) is disordered. A Phosphoserine modification is found at Ser296. One can recognise a Rab-GAP TBC domain in the interval 402-612 (GIPPSVRGKV…RIWDVFCRDG (211 aa)).

In terms of assembly, interacts with ULK1. May interact with RAB11A and RAB11B, but does not exhibit any GTPase-activating activity toward these proteins. Interacts with TRAPPC8.

It localises to the golgi apparatus. The protein resides in the cis-Golgi network. The protein localises to the trans-Golgi network. Functionally, plays a role in the regulation of starvation-induced autophagosome formation. Together with the TRAPPIII complex, regulates a constitutive trafficking step from peripheral recycling endosomes to the early Golgi, maintaining the cycling pool of ATG9 required for initiation of autophagy. The chain is TBC1 domain family member 14 (Tbc1d14) from Mus musculus (Mouse).